The sequence spans 93 residues: uncharacterized protein (93 aa).

It belongs to the BolA/IbaG family.

This is an uncharacterized protein from Sinorhizobium sp.